We begin with the raw amino-acid sequence, 110 residues long: Thiosulfate sulfurtransferase GlpE (110 aa).

The region spanning 17 to 105 (RENGAQVVDI…WRSVYPADTS (89 aa)) is the Rhodanese domain. Cys-65 functions as the Cysteine persulfide intermediate in the catalytic mechanism.

Belongs to the GlpE family.

The protein localises to the cytoplasm. The enzyme catalyses thiosulfate + hydrogen cyanide = thiocyanate + sulfite + 2 H(+). It catalyses the reaction thiosulfate + [thioredoxin]-dithiol = [thioredoxin]-disulfide + hydrogen sulfide + sulfite + 2 H(+). Its function is as follows. Transferase that catalyzes the transfer of sulfur from thiosulfate to thiophilic acceptors such as cyanide or dithiols. May function in a CysM-independent thiosulfate assimilation pathway by catalyzing the conversion of thiosulfate to sulfite, which can then be used for L-cysteine biosynthesis. The chain is Thiosulfate sulfurtransferase GlpE from Pseudomonas aeruginosa (strain LESB58).